A 572-amino-acid chain; its full sequence is Receptor-transporting protein 5 (572 aa).

The 3CxxC-type zinc finger occupies 52 to 148; sequence SRLQCGHCPG…AYEGCCEACE (97 aa). A helical membrane pass occupies residues 544–560; the sequence is FWIWVSMTVCVFWLMCM.

Its subcellular location is the membrane. The protein is Receptor-transporting protein 5 (RTP5) of Homo sapiens (Human).